A 198-amino-acid chain; its full sequence is Transcriptional regulator GfcR (198 aa).

This sequence belongs to the purine/pyrimidine phosphoribosyltransferase family. GfcR subfamily.

The polypeptide is Transcriptional regulator GfcR (Methanospirillum hungatei JF-1 (strain ATCC 27890 / DSM 864 / NBRC 100397 / JF-1)).